Reading from the N-terminus, the 293-residue chain is Short-chain dehydrogenase/reductase PhomF (293 aa).

The NADP(+) site is built by Ile-31 and Asn-102. Residue Ser-175 is the Proton donor of the active site. 3 residues coordinate NADP(+): Tyr-190, Lys-194, and Ser-225. Tyr-190 functions as the Proton acceptor in the catalytic mechanism. The active-site Lowers pKa of active site Tyr is Lys-194.

The protein belongs to the short-chain dehydrogenases/reductases (SDR) family.

Functionally, short-chain dehydrogenase/reductase; part of the gene cluster that mediates the biosynthesis of the phomopsins, a group of hexapeptide mycotoxins which infects lupins and causes lupinosis disease in livestock. The role of phomF within the phomopsins biosynthesis pathway has still to be determined. The pathway starts with the processing of the precursor phomA by several endopeptidases including kexin proteases as well as the cluster-specific S41 family peptidase phomP1 and the oligopeptidase phomG to produce 10 identical copies of the hexapeptide Tyr-Val-Ile-Pro-Ile-Asp. After being excised from the precursor peptide, the core peptides are cyclized and modified post-translationally by enzymes encoded within the gene cluster. The timing and order of proteolysis of the phomA precursor and PTMs are still unknown. Two tyrosinase-like enzymes, phomQ1 and phomQ2, catalyze the chlorination and hydroxylation of Tyr, respectively. PhomYb, is proposed to be involved in the construction of the macrocyclic structure. The other 4 ustYa family proteins may be involved in PTMs that generate the unique structure of phomopsin A. PhomYa is required for the hydroxylation of C-beta of Tyr. PhomYc, phomYd, and phomYe are responsible for the biosynthesis of 2,3-dehydroisoleucine (dIle), 2,3-dehydroaspartic acid (dAsp), and 3,4-dehydroproline (dPro), respectively. While dIle formation by phomYc is indispensable for the installation of dAsp by phomYd, the order of the other PTMs have not been elucidated yet. Most of the biosynthetic enzymes likely have broad substrate specificity, and thus, there might be a metabolic grid from a precursor to phomopsin A. The enzyme(s) responsible for the biosynthesis of 3,4-dehydrovaline (dVal) have also not been identified yet. Finally, phomM acts as an S-adenosylmethionine-dependent alpha-N-methyltransferase that catalyzes two successive N-methylation reactions, converting N-desmethyl-phomopsin A to phomopsin A and phomopsin A further to an N,N-dimethylated congener called phomopsin E. The sequence is that of Short-chain dehydrogenase/reductase PhomF from Diaporthe leptostromiformis (Lupinosis disease fungus).